The primary structure comprises 347 residues: Heat-inducible transcription repressor HrcA (347 aa).

This sequence belongs to the HrcA family.

Negative regulator of class I heat shock genes (grpE-dnaK-dnaJ and groELS operons). Prevents heat-shock induction of these operons. The polypeptide is Heat-inducible transcription repressor HrcA (Enterococcus faecalis (strain ATCC 700802 / V583)).